A 744-amino-acid chain; its full sequence is Polyribonucleotide nucleotidyltransferase (744 aa).

Residues Asp515 and Asp521 each contribute to the Mg(2+) site. Positions 581–640 constitute a KH domain; the sequence is PRVITVQVPVDKIGEVIGPKGKMINQIQDDTGADISIEDDGTVFIGATDGPSAEAARQAI. The S1 motif domain maps to 652-724; it reads GERFVGTVVK…PRGKLSLHAV (73 aa).

The protein belongs to the polyribonucleotide nucleotidyltransferase family. It depends on Mg(2+) as a cofactor.

It is found in the cytoplasm. The enzyme catalyses RNA(n+1) + phosphate = RNA(n) + a ribonucleoside 5'-diphosphate. Its function is as follows. Involved in mRNA degradation. Catalyzes the phosphorolysis of single-stranded polyribonucleotides processively in the 3'- to 5'-direction. The polypeptide is Polyribonucleotide nucleotidyltransferase (Beutenbergia cavernae (strain ATCC BAA-8 / DSM 12333 / CCUG 43141 / JCM 11478 / NBRC 16432 / NCIMB 13614 / HKI 0122)).